The chain runs to 227 residues: Ribonuclease HII (227 aa).

The 210-residue stretch at 1 to 210 folds into the RNase H type-2 domain; that stretch reads MKLAGIDEAG…LKKIEEKLAK (210 aa). A divalent metal cation contacts are provided by aspartate 7, glutamate 8, and aspartate 105.

This sequence belongs to the RNase HII family. It depends on Mn(2+) as a cofactor. Mg(2+) is required as a cofactor.

It is found in the cytoplasm. It catalyses the reaction Endonucleolytic cleavage to 5'-phosphomonoester.. In terms of biological role, endonuclease that specifically degrades the RNA of RNA-DNA hybrids. In Thermococcus onnurineus (strain NA1), this protein is Ribonuclease HII.